Consider the following 337-residue polypeptide: HTH-type transcriptional regulator DegA (337 aa).

The region spanning 1 to 57 (MKTTIYDVAKAAGVSITTVSRVINNTGRISDKTRQKVMNVMNEMAYTPNVHAAALTG) is the HTH lacI-type domain. The H-T-H motif DNA-binding region spans 5 to 24 (IYDVAKAAGVSITTVSRVIN). The interval 300 to 319 (AERHRTAGRSNRGKRKAKQK) is disordered.

Functionally, involved in the control of degradation of B.subtilis amidophosphoribosyltransferase (purF). Probably activates the gene for a degradative protease. The sequence is that of HTH-type transcriptional regulator DegA (degA) from Bacillus subtilis (strain 168).